The sequence spans 156 residues: MPRRRVVGQRKILPDPKFNSELLAKFINVIMQDGKKSTAEKIIYKALDTASEKKSEDHLVILEAALENVRPSVEVKSRRVGGSTYQVPCEVRPVRRNALGMRWLVEAARKRGEKSMALRLAGELLDASDNKGTAVKKREDVHRMAEANKAFAHYRW.

It belongs to the universal ribosomal protein uS7 family. In terms of assembly, part of the 30S ribosomal subunit. Contacts proteins S9 and S11.

In terms of biological role, one of the primary rRNA binding proteins, it binds directly to 16S rRNA where it nucleates assembly of the head domain of the 30S subunit. Is located at the subunit interface close to the decoding center, probably blocks exit of the E-site tRNA. The sequence is that of Small ribosomal subunit protein uS7 from Shewanella sediminis (strain HAW-EB3).